Consider the following 122-residue polypeptide: MANQEQIIEAIKEMSVLELNDLVKAIEEEFGVTAAAPVAAAGAAGGGDAAAEKTEFDVELTSAGSSKIKVVKAVKEATGLGLKDAKELVDNAPKVIKEGVAKEEAEKLKEQLEEVGATVELK.

This sequence belongs to the bacterial ribosomal protein bL12 family. In terms of assembly, homodimer. Part of the ribosomal stalk of the 50S ribosomal subunit. Forms a multimeric L10(L12)X complex, where L10 forms an elongated spine to which 2 to 4 L12 dimers bind in a sequential fashion. Binds GTP-bound translation factors.

Functionally, forms part of the ribosomal stalk which helps the ribosome interact with GTP-bound translation factors. Is thus essential for accurate translation. The protein is Large ribosomal subunit protein bL12 of Staphylococcus haemolyticus (strain JCSC1435).